The primary structure comprises 443 residues: ATP-dependent protease ATPase subunit HslU (443 aa).

ATP-binding positions include isoleucine 18 and 60–65 (GVGKTE). The disordered stretch occupies residues 141 to 165 (DQWGQNEENDTDSSTRQSFRKKLRE). The ATP site is built by aspartate 256, glutamate 321, and arginine 393.

The protein belongs to the ClpX chaperone family. HslU subfamily. As to quaternary structure, a double ring-shaped homohexamer of HslV is capped on each side by a ring-shaped HslU homohexamer. The assembly of the HslU/HslV complex is dependent on binding of ATP.

The protein localises to the cytoplasm. In terms of biological role, ATPase subunit of a proteasome-like degradation complex; this subunit has chaperone activity. The binding of ATP and its subsequent hydrolysis by HslU are essential for unfolding of protein substrates subsequently hydrolyzed by HslV. HslU recognizes the N-terminal part of its protein substrates and unfolds these before they are guided to HslV for hydrolysis. The sequence is that of ATP-dependent protease ATPase subunit HslU from Photobacterium profundum (strain SS9).